Consider the following 1081-residue polypeptide: Probable cellulose synthase A catalytic subunit 8 [UDP-forming] (1081 aa).

Topologically, residues 1 to 277 are cytoplasmic; the sequence is MDGDADAVKS…PSSRINPYRM (277 aa). 8 residues coordinate Zn(2+): Cys19, Cys22, Cys38, Cys41, Cys46, Cys49, Cys61, and Cys64. Residues 19–65 form an RING-type; degenerate zinc finger; sequence CQICGDGVGTTAEGDVFAACDVCGFPVCRPCYEYERKDGTQACPQCK. A disordered region spans residues 72–148; sequence KGSPAIRGEE…YDSGEIPRGY (77 aa). The segment covering 81-91 has biased composition (acidic residues); that stretch reads EGEDTDADDVS. Over residues 103-112 the composition is skewed to basic and acidic residues; that stretch reads QKQKIADRMR. A helical transmembrane segment spans residues 278-298; sequence VIVLRLVVLSIFLHYRITNPV. Topologically, residues 299-300 are extracellular; the sequence is RN. The chain crosses the membrane as a helical span at residues 301–321; sequence AYPLWLLSVICEIWFALSWIL. The Cytoplasmic portion of the chain corresponds to 322–864; the sequence is DQFPKWFPIN…INTTIYPLTS (543 aa). UDP-alpha-D-glucose contacts are provided by Ser360, Lys366, Glu367, and Asp396. Asp396 is a catalytic residue. Residues 450-477 adopt a coiled-coil conformation; sequence VKDRRAMKREYEEFKVRINGLVAKAQKV. Lys537 contributes to the UDP-alpha-D-glucose binding site. 2 residues coordinate Mn(2+): Lys538 and Asp562. The disordered stretch occupies residues 660-684; that stretch reads SLCGGRKKASKSKKKSSDKKKSNKH. The segment covering 664 to 682 has biased composition (basic residues); sequence GRKKASKSKKKSSDKKKSN. Asp781 is an active-site residue. The helical transmembrane segment at 865–885 threads the bilayer; the sequence is IPLLIYCVLPAICLLTGKFII. Residues 886 to 890 are Extracellular-facing; that stretch reads PEISN. The chain crosses the membrane as a helical span at residues 891-911; sequence FASIWFISLFISIFATGILEM. Residues 912 to 926 lie on the Cytoplasmic side of the membrane; the sequence is RWSGVGIDEWWRNEQ. The chain crosses the membrane as a helical span at residues 927-947; the sequence is FWVIGGISAHLFAVFQGLLKV. The Extracellular segment spans residues 948–977; sequence LAGIDTNFTVTSKASDEDGDFAELYMFKWT. Asn954 carries N-linked (GlcNAc...) asparagine glycosylation. Residues 978–998 traverse the membrane as a helical segment; that stretch reads TLLIPPTTILIINLVGVVAGI. Residues 999-1009 lie on the Cytoplasmic side of the membrane; it reads SYAINSGYQSW. The chain crosses the membrane as a helical span at residues 1010–1030; the sequence is GPLFGKLFFAFWVIVHLYPFL. The Extracellular segment spans residues 1031-1039; it reads KGLMGRQNR. A helical transmembrane segment spans residues 1040–1060; the sequence is TPTIVVVWAILLASIFSLLWV. Topologically, residues 1061–1081 are cytoplasmic; sequence RIDPFTTRVTGPDTQTCGINC.

The protein belongs to the glycosyltransferase 2 family. Plant cellulose synthase subfamily. Mn(2+) serves as cofactor. Requires Zn(2+) as cofactor.

The protein localises to the cell membrane. The catalysed reaction is [(1-&gt;4)-beta-D-glucosyl](n) + UDP-alpha-D-glucose = [(1-&gt;4)-beta-D-glucosyl](n+1) + UDP + H(+). Its pathway is glycan metabolism; plant cellulose biosynthesis. Its function is as follows. Probable catalytic subunit of cellulose synthase terminal complexes ('rosettes'), required for beta-1,4-glucan microfibril crystallization, a major mechanism of the cell wall formation. The chain is Probable cellulose synthase A catalytic subunit 8 [UDP-forming] (CESA8) from Oryza sativa subsp. japonica (Rice).